A 342-amino-acid polypeptide reads, in one-letter code: Phosphate acyltransferase (342 aa).

This sequence belongs to the PlsX family. In terms of assembly, homodimer. Probably interacts with PlsY.

The protein localises to the cytoplasm. The catalysed reaction is a fatty acyl-[ACP] + phosphate = an acyl phosphate + holo-[ACP]. Its pathway is lipid metabolism; phospholipid metabolism. Its function is as follows. Catalyzes the reversible formation of acyl-phosphate (acyl-PO(4)) from acyl-[acyl-carrier-protein] (acyl-ACP). This enzyme utilizes acyl-ACP as fatty acyl donor, but not acyl-CoA. This is Phosphate acyltransferase from Shewanella sediminis (strain HAW-EB3).